A 544-amino-acid chain; its full sequence is Secreted aspartic protease 9 (544 aa).

Positions 1 to 17 are cleaved as a signal peptide; sequence MRLNSVALLSLVATALA. The interval 31 to 50 is disordered; sequence GESKDDLSPEDDSNPRFVKR. Residues 65 to 479 form the Peptidase A1 domain; that stretch reads YMATLKIGSN…DLDDYEVSLA (415 aa). Asp83 is a catalytic residue. 83–85 contacts pepstatin A; that stretch reads DTG. Cysteines 98 and 195 form a disulfide. Asn212, Asn240, and Asn252 each carry an N-linked (GlcNAc...) asparagine glycan. Asp371 is a catalytic residue. Pepstatin A is bound at residue 371-375; it reads DTGST. Cys406 and Cys441 are disulfide-bonded. N-linked (GlcNAc...) asparagine glycosylation is found at Asn422 and Asn499. A disordered region spans residues 500 to 519; sequence SSGSGTTSSSGTSTSTSTRH. Ser520 carries GPI-anchor amidated serine lipidation. The propeptide at 521 to 544 is removed in mature form; sequence AGSIISKPVYGLLLSLLISCYVLV. Residues 524 to 544 form a helical membrane-spanning segment; it reads IISKPVYGLLLSLLISCYVLV.

Belongs to the peptidase A1 family. As to quaternary structure, monomer. The GPI-anchor is attached to the protein in the endoplasmic reticulum and serves to target the protein to the cell surface. There, the glucosamine-inositol phospholipid moiety is cleaved off and the GPI-modified mannoprotein is covalently attached via its lipidless GPI glycan remnant to the 1,6-beta-glucan of the outer cell wall layer.

It localises to the cell membrane. The protein localises to the secreted. Its subcellular location is the cell wall. It catalyses the reaction Preferential cleavage at the carboxyl of hydrophobic amino acids, but fails to cleave 15-Leu-|-Tyr-16, 16-Tyr-|-Leu-17 and 24-Phe-|-Phe-25 of insulin B chain. Activates trypsinogen, and degrades keratin.. Functionally, secreted aspartic peptidases (SAPs) are a group of ten acidic hydrolases considered as key virulence factors. These enzymes supply the fungus with nutrient amino acids as well as are able to degrade the selected host's proteins involved in the immune defense. Moreover, acts toward human hemoglobin though limited proteolysis to generate a variety of antimicrobial hemocidins, enabling to compete with the other microorganisms of the same physiological niche using the microbicidal peptides generated from the host protein. In terms of biological role, plays a key role in defense against host by cleaving histatin-5 (Hst 5), a peptide from human saliva that carries out fungicidal activity. The cleavage rate decreases in an order of SAP2 &gt; SAP9 &gt; SAP3 &gt; SAP7 &gt; SAP4 &gt; SAP1 &gt; SAP8. The first cleavage occurs between residues 'Lys-17' and 'His-18' of Hst 5, giving DSHAKRHHGYKRKFHEK and HHSHRGY peptides. Simultaneously, the DSHAKRHHGYKRK peptide is also formed. Further fragmentation by SAP9 results in FHEK product. This chain is Secreted aspartic protease 9, found in Candida albicans (strain SC5314 / ATCC MYA-2876) (Yeast).